We begin with the raw amino-acid sequence, 24 residues long: Coenzyme PQQ synthesis protein A (24 aa).

Positions 16 to 20 (EVTMY) form a cross-link, pyrroloquinoline quinone (Glu-Tyr).

It belongs to the PqqA family.

The protein operates within cofactor biosynthesis; pyrroloquinoline quinone biosynthesis. In terms of biological role, required for coenzyme pyrroloquinoline quinone (PQQ) biosynthesis. PQQ is probably formed by cross-linking a specific glutamate to a specific tyrosine residue and excising these residues from the peptide. The chain is Coenzyme PQQ synthesis protein A from Pseudomonas fluorescens (strain Pf0-1).